We begin with the raw amino-acid sequence, 237 residues long: Beta-glucanase (237 aa).

The signal sequence occupies residues 1–23 (MKKKSCFTLVTTFAFSLIFSVSA). The region spanning 28-237 (VFWEPLSYFN…EYDWVKYTSN (210 aa)) is the GH16 domain. Cys-55 and Cys-84 are joined by a disulfide. Glu-128 (nucleophile) is an active-site residue. Glu-132 acts as the Proton donor in catalysis.

It belongs to the glycosyl hydrolase 16 family.

The enzyme catalyses Hydrolysis of (1-&gt;4)-beta-D-glucosidic linkages in beta-D-glucans containing (1-&gt;3)- and (1-&gt;4)-bonds.. The chain is Beta-glucanase from Paenibacillus macerans (Bacillus macerans).